Here is a 288-residue protein sequence, read N- to C-terminus: Cyclin-dependent kinase 2 homolog (288 aa).

A Protein kinase domain is found at 4-284 (YHGLEKIGEG…AKQAIEHPYF (281 aa)). ATP-binding positions include 10–18 (IGEGTYGVV) and lysine 32. Threonine 14 carries the post-translational modification Phosphothreonine. Tyrosine 15 carries the phosphotyrosine modification. Aspartate 125 acts as the Proton acceptor in catalysis. Threonine 158 is subject to Phosphothreonine.

The protein belongs to the protein kinase superfamily. CMGC Ser/Thr protein kinase family. CDC2/CDKX subfamily. May form a complex composed of at least the catalytic subunit CRK2 and a cyclin. Requires Mg(2+) as cofactor.

The protein localises to the cytoplasm. The enzyme catalyses L-seryl-[protein] + ATP = O-phospho-L-seryl-[protein] + ADP + H(+). The catalysed reaction is L-threonyl-[protein] + ATP = O-phospho-L-threonyl-[protein] + ADP + H(+). It catalyses the reaction [DNA-directed RNA polymerase] + ATP = phospho-[DNA-directed RNA polymerase] + ADP + H(+). Phosphorylation at Thr-14 or Tyr-15 inactivates the enzyme, while phosphorylation at Thr-158 activates it. Serine/threonine-protein kinase. Involved in the control of the cell cycle. Required for entry into S-phase and mitosis. Probable component of the kinase complex that phosphorylates the repetitive C-terminus of RNA polymerase II. The polypeptide is Cyclin-dependent kinase 2 homolog (Plasmodium berghei (strain Anka)).